A 227-amino-acid polypeptide reads, in one-letter code: Hydroxylase/desaturase asaB (227 aa).

It belongs to the asaB hydroxylase/desaturase family.

It participates in secondary metabolite biosynthesis. Hydroxylase/desaturase; part of the gene cluster that mediates the biosynthesis of aspergillic acid, a hydroxamic acid-containing pyrazinone with aliphatic side chains that originates from leucine (Leu) and isoleucine (Ile). Aspergillic acid has antibiotic properties and was shown to be lethal to mice. The first step in the pathway is the production of deoxyaspergillic acid via a condensation between the Ile amine and the Leu carboxylic acid, followed by a reductive release from the protein forming the dipeptide aldehyde NH(2)-Leu-Ile-CHO, which could undergo an intermolecular cyclization resulting in a dihydropyrazinone. As the NRPS asaC lacks a condensation domain, it is improbable that it is responsible for condensation of Leu and Ile. One possibility is that asaC acts on a previously condensed dipeptide and functions as a Leu-Ile reductase to yield deoxyaspergillic acid. After asaC forms deoxyaspergillic acid, the cytochrome P450 asaD oxidizes the pyrazinone to the hydroxamic acid-containing bioactive metabolite aspergillic acid. The hydroxylase/desaturase asaB can then convert aspergillic acid to hydroxyaspergillic acid. Both aspergillic acid and hydroxyaspergillic acid can form complexes with iron producing ferriaspergillin analogs. The sequence is that of Hydroxylase/desaturase asaB from Aspergillus flavus (strain ATCC 200026 / FGSC A1120 / IAM 13836 / NRRL 3357 / JCM 12722 / SRRC 167).